A 364-amino-acid polypeptide reads, in one-letter code: tRNA-specific 2-thiouridylase MnmA (364 aa).

ATP is bound by residues 13–20 and Met-39; that span reads GMSGGVDS. The interaction with target base in tRNA stretch occupies residues 99-101; sequence NPD. The active-site Nucleophile is the Cys-104. A disulfide bond links Cys-104 and Cys-200. Gly-128 contributes to the ATP binding site. Positions 150–152 are interaction with tRNA; that stretch reads KDQ. Residue Cys-200 is the Cysteine persulfide intermediate of the active site. The tract at residues 310-311 is interaction with tRNA; the sequence is RY.

It belongs to the MnmA/TRMU family.

It is found in the cytoplasm. It carries out the reaction S-sulfanyl-L-cysteinyl-[protein] + uridine(34) in tRNA + AH2 + ATP = 2-thiouridine(34) in tRNA + L-cysteinyl-[protein] + A + AMP + diphosphate + H(+). In terms of biological role, catalyzes the 2-thiolation of uridine at the wobble position (U34) of tRNA, leading to the formation of s(2)U34. This Alkaliphilus oremlandii (strain OhILAs) (Clostridium oremlandii (strain OhILAs)) protein is tRNA-specific 2-thiouridylase MnmA.